An 83-amino-acid chain; its full sequence is Toxin To15 (83 aa).

The N-terminal stretch at methionine 1–glycine 19 is a signal peptide. One can recognise an LCN-type CS-alpha/beta domain in the interval lysine 21–tyrosine 82. 4 disulfide bridges follow: cysteine 31/cysteine 81, cysteine 35/cysteine 57, cysteine 43/cysteine 62, and cysteine 47/cysteine 64.

This sequence belongs to the long (4 C-C) scorpion toxin superfamily. Sodium channel inhibitor family. Beta subfamily. In terms of tissue distribution, expressed by the venom gland.

Its subcellular location is the secreted. Beta toxins bind voltage-independently at site-4 of sodium channels (Nav) and shift the voltage of activation toward more negative potentials thereby affecting sodium channel activation and promoting spontaneous and repetitive firing. This chain is Toxin To15, found in Tityus obscurus (Amazonian scorpion).